The sequence spans 542 residues: Membrane protein insertase YidC (542 aa).

The next 6 helical transmembrane spans lie at 6 to 26, 326 to 346, 350 to 370, 421 to 441, 458 to 478, and 501 to 521; these read NILLIGLLFVSFLMWQQWQTD, LVVDYGFLWWLAIPIHWLLMF, FVGNWGVAIILITLTVRGGLY, GGCLPILLQMPIFIALYWVLL, LSVQDPYYVLPLLMGLSMFLM, and VIFTVFFLWFPAGLVLYWLVG.

Belongs to the OXA1/ALB3/YidC family. Type 1 subfamily. In terms of assembly, interacts with the Sec translocase complex via SecD. Specifically interacts with transmembrane segments of nascent integral membrane proteins during membrane integration.

The protein resides in the cell inner membrane. Functionally, required for the insertion and/or proper folding and/or complex formation of integral membrane proteins into the membrane. Involved in integration of membrane proteins that insert both dependently and independently of the Sec translocase complex, as well as at least some lipoproteins. Aids folding of multispanning membrane proteins. This is Membrane protein insertase YidC from Shewanella frigidimarina (strain NCIMB 400).